The following is a 368-amino-acid chain: Protein ALTERED XYLOGLUCAN 9 (368 aa).

At 1-32 the chain is on the cytoplasmic side; it reads MLGAIHLGVLAACFVLFVPMAMAGWHLSRNKM. A helical membrane pass occupies residues 33–53; the sequence is LFFSGALFISLAVCVHLTPYF. The Lumenal portion of the chain corresponds to 54–368; that stretch reads PSVSDIVASV…ALLIESHQSL (315 aa). N-linked (GlcNAc...) asparagine glycosylation is found at N99, N137, and N235.

The protein localises to the golgi apparatus membrane. Its function is as follows. Component of the plant cell wall polysaccharide acetylation pathway. Does not directly catalyze O-acetylation of xyloglucan but exhibits weak acetylesterase activity in vitro. This is Protein ALTERED XYLOGLUCAN 9 from Arabidopsis thaliana (Mouse-ear cress).